The sequence spans 1132 residues: SNF2 domain-containing protein CLASSY 4 (1132 aa).

Disordered stretches follow at residues 24–104 (NKSK…SKSF), 224–331 (LRGE…HHKK), 376–396 (DPVV…PRER), and 525–544 (PSVN…LPNR). A Nuclear localization signal motif is present at residues 47 to 54 (KRRVNMRD). Basic and acidic residues predominate over residues 81–90 (EYPEGKRDDE). A compositionally biased stretch (polar residues) spans 92-103 (VGSTSGNLQSKS). The segment covering 233-242 (SDEVVSLSSS) has biased composition (low complexity). The span at 243–254 (SDDEEDPLEELG) shows a compositional bias: acidic residues. A compositionally biased stretch (basic and acidic residues) spans 255–269 (TDSREEVSGEDRDSG). 2 stretches are compositionally biased toward acidic residues: residues 270–282 (ESDM…DSDS) and 291–309 (DSSD…EDEE). Composition is skewed to basic and acidic residues over residues 310 to 326 (GGTR…SEKV), 376 to 392 (DPVV…EHGK), and 525 to 539 (PSVN…RKGD). In terms of domain architecture, Helicase ATP-binding spans 603–796 (SVGVKGSGGC…SNVLCLARPA (194 aa)). Position 616–623 (616–623 (HKAGTGKT)) interacts with ATP. The DEAH box motif lies at 747-750 (DEGH). The region spanning 934-1087 (DFIRISGTVK…ELVFSSTNEK (154 aa)) is the Helicase C-terminal domain.

This sequence belongs to the SNF2/RAD54 helicase family. Interacts with NRPD1.

It is found in the nucleus. Functionally, probable chromatin remodeling factor. The polypeptide is SNF2 domain-containing protein CLASSY 4 (CLSY4) (Arabidopsis thaliana (Mouse-ear cress)).